The primary structure comprises 339 residues: MIFIDACFRKETPYTPIWMMRQAGRYLSEYQESRKKAGSFLELCKNSDLATEVTLQPVEILGVDAAILFSDILVVPLEMGLNLEFIPKKGPHFLETITDLKSVESLKIEAYKQLNYVYDTISQTRQKLSKEKALIGFCGSPWTLATYMIEGEGSKSYAKSKKMLYSEPEVLKALLEKLSLELIEYLSLQIQAGVNAVMIFDSWASALEKEAYLKFSWDYLKKISKELKKRYAHIPVILFPKGIGAYLDSIDGEFDVFGVDWGTPLEVAKKILGDKYVLQGNLEPTRLYDKNALEEGVERILKVMGNQGHIFNLGHGMLPDLPRENAKYLVQLVHAKTRR.

Substrate is bound by residues 21 to 25 (RQAGR), aspartate 71, tyrosine 147, serine 202, and histidine 315.

This sequence belongs to the uroporphyrinogen decarboxylase family. As to quaternary structure, homodimer.

Its subcellular location is the cytoplasm. The enzyme catalyses uroporphyrinogen III + 4 H(+) = coproporphyrinogen III + 4 CO2. It functions in the pathway porphyrin-containing compound metabolism; protoporphyrin-IX biosynthesis; coproporphyrinogen-III from 5-aminolevulinate: step 4/4. Catalyzes the decarboxylation of four acetate groups of uroporphyrinogen-III to yield coproporphyrinogen-III. This chain is Uroporphyrinogen decarboxylase, found in Helicobacter pylori (strain Shi470).